Reading from the N-terminus, the 868-residue chain is Leucine--tRNA ligase (868 aa).

Residues 42–52 carry the 'HIGH' region motif; that stretch reads PYPSGKLHMGH. A 'KMSKS' region motif is present at residues 627 to 631; that stretch reads KMSKS. Lys-630 is a binding site for ATP.

It belongs to the class-I aminoacyl-tRNA synthetase family.

The protein resides in the cytoplasm. It carries out the reaction tRNA(Leu) + L-leucine + ATP = L-leucyl-tRNA(Leu) + AMP + diphosphate. The protein is Leucine--tRNA ligase of Pseudomonas putida (strain ATCC 700007 / DSM 6899 / JCM 31910 / BCRC 17059 / LMG 24140 / F1).